Consider the following 214-residue polypeptide: Small ribosomal subunit protein uS5 (214 aa).

The S5 DRBM domain occupies 54–117 (LRYDIVDIGI…RDAKMRIIPV (64 aa)).

The protein belongs to the universal ribosomal protein uS5 family. As to quaternary structure, part of the 30S ribosomal subunit. Contacts protein S4.

In terms of biological role, with S4 and S12 plays an important role in translational accuracy. The polypeptide is Small ribosomal subunit protein uS5 (Sulfolobus acidocaldarius (strain ATCC 33909 / DSM 639 / JCM 8929 / NBRC 15157 / NCIMB 11770)).